The primary structure comprises 116 residues: Putative iron-sulfur cluster insertion protein ErpA (116 aa).

Iron-sulfur cluster is bound by residues cysteine 44, cysteine 108, and cysteine 110.

Belongs to the HesB/IscA family. In terms of assembly, homodimer. The cofactor is iron-sulfur cluster.

Its function is as follows. Required for insertion of 4Fe-4S clusters. The polypeptide is Putative iron-sulfur cluster insertion protein ErpA (Azoarcus sp. (strain BH72)).